We begin with the raw amino-acid sequence, 145 residues long: ATP synthase epsilon chain (145 aa).

It belongs to the ATPase epsilon chain family. As to quaternary structure, F-type ATPases have 2 components, CF(1) - the catalytic core - and CF(0) - the membrane proton channel. CF(1) has five subunits: alpha(3), beta(3), gamma(1), delta(1), epsilon(1). CF(0) has three main subunits: a, b and c.

Its subcellular location is the cell membrane. Produces ATP from ADP in the presence of a proton gradient across the membrane. This chain is ATP synthase epsilon chain, found in Buchnera aphidicola subsp. Baizongia pistaciae (strain Bp).